We begin with the raw amino-acid sequence, 230 residues long: Sugar fermentation stimulation protein homolog (230 aa).

This sequence belongs to the SfsA family.

This chain is Sugar fermentation stimulation protein homolog, found in Clostridium botulinum (strain Alaska E43 / Type E3).